The chain runs to 532 residues: ATP-dependent RNA helicase DBP3 (532 aa).

A disordered region spans residues 1–78 (MGKRDRTEDD…EVAEEKPKMT (78 aa)). Residues 15-58 (KKVKLDKKDKKEKKEKKDKKDKKDKKDKKDKKDKKEKKEKKEKK) are compositionally biased toward basic residues. The Q motif signature appears at 126-152 (MEFSHVTLDPRITKVLTKFPRPTPIQA). Residues 155–327 (WPYLLAGKDM…EGFMKTPTKV (173 aa)) enclose the Helicase ATP-binding domain. 168–175 (AETGSGKT) is an ATP binding site. A DEAD box motif is present at residues 274 to 277 (DEAD). The 147-residue stretch at 356-502 (RLLDLLRQYA…PVPDELLKFG (147 aa)) folds into the Helicase C-terminal domain.

It belongs to the DEAD box helicase family. DDX5/DBP2 subfamily.

It is found in the nucleus. It localises to the nucleolus. It carries out the reaction ATP + H2O = ADP + phosphate + H(+). ATP-dependent RNA helicase required for 60S ribosomal subunit synthesis. Involved in efficient pre-rRNA processing, predominantly at site A3, which is necessary for the normal formation of 25S and 5.8S rRNAs. In Yarrowia lipolytica (strain CLIB 122 / E 150) (Yeast), this protein is ATP-dependent RNA helicase DBP3 (DBP3).